Consider the following 296-residue polypeptide: ATP synthase peripheral stalk subunit OSCP, mitochondrial (296 aa).

This sequence belongs to the ATPase delta chain family. Component of the ATP synthase complex composed at least of ATP5F1A/subunit alpha, ATP5F1B/subunit beta, ATP5MC1/subunit c (homooctomer), MT-ATP6/subunit a, MT-ATP8/subunit 8, ATP5ME/subunit e, ATP5MF/subunit f, ATP5MG/subunit g, ATP5MK/subunit k, ATP5MJ/subunit j, ATP5F1C/subunit gamma, ATP5F1D/subunit delta, ATP5F1E/subunit epsilon, ATP5PF/subunit F6, ATP5PB/subunit b, ATP5PD/subunit d, ATP5PO/subunit OSCP. ATP synthase complex consists of a soluble F(1) head domain (subunits alpha(3) and beta(3)) - the catalytic core - and a membrane F(0) domain - the membrane proton channel (subunits c, a, 8, e, f, g, k and j). These two domains are linked by a central stalk (subunits gamma, delta, and epsilon) rotating inside the F1 region and a stationary peripheral stalk (subunits F6, b, d, and OSCP).

The protein resides in the mitochondrion. It is found in the mitochondrion inner membrane. Its function is as follows. Subunit OSCP, of the mitochondrial membrane ATP synthase complex (F(1)F(0) ATP synthase or Complex V) that produces ATP from ADP in the presence of a proton gradient across the membrane which is generated by electron transport complexes of the respiratory chain. ATP synthase complex consist of a soluble F(1) head domain - the catalytic core - and a membrane F(1) domain - the membrane proton channel. These two domains are linked by a central stalk rotating inside the F(1) region and a stationary peripheral stalk. During catalysis, ATP synthesis in the catalytic domain of F(1) is coupled via a rotary mechanism of the central stalk subunits to proton translocation. In vivo, can only synthesize ATP although its ATP hydrolase activity can be activated artificially in vitro. Part of the complex F(0) domain. Part of the complex F(0) domain and the peripheric stalk, which acts as a stator to hold the catalytic alpha(3)beta(3) subcomplex and subunit a/ATP6 static relative to the rotary elements. The chain is ATP synthase peripheral stalk subunit OSCP, mitochondrial from Dictyostelium discoideum (Social amoeba).